The primary structure comprises 123 residues: Venom protein 29 (123 aa).

Positions 1–18 are cleaved as a signal peptide; that stretch reads MNKLFLFTLLVTLWSVKG.

Contains 3 disulfide bonds. Expressed by the venom gland.

The protein resides in the secreted. The polypeptide is Venom protein 29 (Lychas mucronatus (Chinese swimming scorpion)).